We begin with the raw amino-acid sequence, 1208 residues long: MERLRDVRERLQAWERAFRRQRGRRPSQDDVEAAPEETRALYREYRTLKRTTGQAGGGLRSSESLPAAAEEAPEPRCWGPHLNRAATKSPQSTPGRSRQGSVPDYGQRLKANLKGTLQAGPALGRRPWPLGRASSKASTPKPPGTGPVPSFAEKVSDEPPQLPEPQPRPGRLQHLQASLSQRLGSLDPGWLQRCHSEVPDFLGAPKACRPDLGSEESQLLIPGESAVLGPGAGSQGPEASAFQEVSIRVGSPQPSSSGGEKRRWNEEPWESPAQVQQESSQAGPPSEGAGAVAVEEDPPGEPVQAQPPQPCSSPSNPRYHGLSPSSQARAGKAEGTAPLHIFPRLARHDRGNYVRLNMKQKHYVRGRALRSRLLRKQAWKQKWRKKGECFGGGGATVTTKESCFLNEQFDHWAAQCPRPASEEDTDAVGPEPLVPSPQPVPEVPSLDPTVLPLYSLGPSGQLAETPAEVFQALEQLGHQAFRPGQERAVMRILSGISTLLVLPTGAGKSLCYQLPALLYSRRSPCLTLVVSPLLSLMDDQVSGLPPCLKAACIHSGMTRKQRESVLQKIRAAQVHVLMLTPEALVGAGGLPPAAQLPPVAFACIDEAHCLSQWSHNFRPCYLRVCKVLRERMGVHCFLGLTATATRRTASDVAQHLAVAEEPDLHGPAPVPTNLHLSVSMDRDTDQALLTLLQGKRFQNLDSIIIYCNRREDTERIAALLRTCLHAAWVPGSGGRAPKTTAEAYHAGMCSRERRRVQRAFMQGQLRVVVATVAFGMGLDRPDVRAVLHLGLPPSFESYVQAVGRAGRDGQPAHCHLFLQPQGEDLRELRRHVHADSTDFLAVKRLVQRVFPACTCTCTRPPSEQEGAVGGERPVPKYPPQEAEQLSHQAAPGPRRVCMGHERALPIQLTVQALDMPEEAIETLLCYLELHPHHWLELLATTYTHCRLNCPGGPAQLQALAHRCPPLAVCLAQQLPEDPGQGSSSVEFDMVKLVDSMGWELASVRRALCQLQWDHEPRTGVRRGTGVLVEFSELAFHLRSPGDLTAEEKDQICDFLYGRVQARERQALARLRRTFQAFHSVAFPSCGPCLEQQDEERSTRLKDLLGRYFEEEEGQEPGGMEDAQGPEPGQARLQDWEDQVRCDIRQFLSLRPEEKFSSRAVARIFHGIGSPCYPAQVYGQDRRFWRKYLHLSFHALVGLATEELLQVAR.

Disordered stretches follow at residues 17 to 180 (AFRR…ASLS) and 201 to 333 (FLGA…AGKA). Residue Ser27 is modified to Phosphoserine. Residues 36–47 (EETRALYREYRT) show a composition bias toward basic and acidic residues. Over residues 61-70 (SSESLPAAAE) the composition is skewed to low complexity. The span at 86–100 (ATKSPQSTPGRSRQG) shows a compositional bias: polar residues. Phosphoserine is present on residues Ser178 and Ser180. Residues 273 to 283 (AQVQQESSQAG) show a composition bias toward polar residues. The region spanning 489-662 (VMRILSGIST…AQHLAVAEEP (174 aa)) is the Helicase ATP-binding domain. ATP is bound at residue 502-509 (LPTGAGKS). The short motif at 605–608 (DEAH) is the DEAH box element. A Helicase C-terminal domain is found at 683–850 (DTDQALLTLL…AVKRLVQRVF (168 aa)). The Zn(2+) site is built by Cys853 and Cys855. The disordered stretch occupies residues 860-888 (PPSEQEGAVGGERPVPKYPPQEAEQLSHQ). Zn(2+) is bound by residues Cys897 and His900. A disordered region spans residues 1111 to 1130 (EEGQEPGGMEDAQGPEPGQA). The tract at residues 1117 to 1208 (GGMEDAQGPE…ATEELLQVAR (92 aa)) is increases helicase activity about 5-fold (in a fragment starting at residue 427).

It belongs to the helicase family. RecQ subfamily. Interacts with UBR1 and UBR2. Interacts with MCM10; this interaction regulates RECQL4 unwinding activity. Interacts (via residues 1-54) with TOPBP1. The cofactor is Zn(2+). Ubiquitously expressed, with highest levels in thymus and testis.

The protein resides in the cytoplasm. Its subcellular location is the nucleus. It catalyses the reaction Couples ATP hydrolysis with the unwinding of duplex DNA by translocating in the 3'-5' direction.. It carries out the reaction ATP + H2O = ADP + phosphate + H(+). Functionally, an ATP-dependent DNA helicase which unwinds dsDNA with a 3'-overhang in a 3'-5' direction. Does not unwind more than 18 bp of dsDNA. May modulate chromosome segregation. The N-terminal domain (residues 1-54) binds DNA Y-shaped DNA better than ss- or dsDNA. The core helicase domain binds ssDNA. The protein is ATP-dependent DNA helicase Q4 (RECQL4) of Homo sapiens (Human).